Reading from the N-terminus, the 134-residue chain is ATP synthase epsilon chain (134 aa).

This sequence belongs to the ATPase epsilon chain family. In terms of assembly, F-type ATPases have 2 components, CF(1) - the catalytic core - and CF(0) - the membrane proton channel. CF(1) has five subunits: alpha(3), beta(3), gamma(1), delta(1), epsilon(1). CF(0) has three main subunits: a, b and c.

Its subcellular location is the cell membrane. In terms of biological role, produces ATP from ADP in the presence of a proton gradient across the membrane. The chain is ATP synthase epsilon chain (atpC) from Priestia megaterium (strain ATCC 12872 / QMB1551) (Bacillus megaterium).